Consider the following 466-residue polypeptide: Ribulose bisphosphate carboxylase large chain (466 aa).

N6,N6,N6-trimethyllysine is present on lysine 5. Substrate contacts are provided by asparagine 114 and threonine 164. Lysine 166 (proton acceptor) is an active-site residue. Position 168 (lysine 168) interacts with substrate. Mg(2+) is bound by residues lysine 192, aspartate 194, and glutamate 195. Lysine 192 carries the post-translational modification N6-carboxylysine. Catalysis depends on histidine 285, which acts as the Proton acceptor. Substrate contacts are provided by arginine 286, histidine 318, and serine 370.

Belongs to the RuBisCO large chain family. Type I subfamily. As to quaternary structure, heterohexadecamer of 8 large chains and 8 small chains; disulfide-linked. The disulfide link is formed within the large subunit homodimers. It depends on Mg(2+) as a cofactor. In terms of processing, the disulfide bond which can form in the large chain dimeric partners within the hexadecamer appears to be associated with oxidative stress and protein turnover.

It is found in the plastid. It localises to the chloroplast. The enzyme catalyses 2 (2R)-3-phosphoglycerate + 2 H(+) = D-ribulose 1,5-bisphosphate + CO2 + H2O. It carries out the reaction D-ribulose 1,5-bisphosphate + O2 = 2-phosphoglycolate + (2R)-3-phosphoglycerate + 2 H(+). Its function is as follows. RuBisCO catalyzes two reactions: the carboxylation of D-ribulose 1,5-bisphosphate, the primary event in carbon dioxide fixation, as well as the oxidative fragmentation of the pentose substrate in the photorespiration process. Both reactions occur simultaneously and in competition at the same active site. This is Ribulose bisphosphate carboxylase large chain from Moringa oleifera (Horseradish tree).